The chain runs to 155 residues: Pre-hexon-linking protein VIII (155 aa).

A propeptide spanning residues 44 to 84 (GVHRTKDIKPEDLVGRGIQLNSYQPPTTRLKPERVFQLAGG) is cleaved from the precursor.

The protein belongs to the adenoviridae hexon-linking protein family. Interacts with the peripentonal hexons as well as the hexons in the facets. Part of a complex composed of the core-capsid bridging protein, the endosome lysis protein VI and the hexon-linking protein VIII; these interactions bridge the virus core to the capsid. In terms of processing, cleaved by the viral protease during virion maturation. May cause the middle segment to be shed from the capsid.

It is found in the virion. Its subcellular location is the host nucleus. Functionally, structural component of the virion that acts as a cement protein on the capsid interior and which glue the peripentonal hexons and group-of-nine hexons together. The sequence is that of Pre-hexon-linking protein VIII from Bos taurus (Bovine).